A 198-amino-acid chain; its full sequence is Probable GTP-binding protein EngB (198 aa).

Residues Asn22–Thr195 enclose the EngB-type G domain. GTP is bound by residues Gly30 to Ser37, Gly57 to Leu61, Asp75 to Gly78, Thr142 to Asp145, and Phe174 to Ser176. Mg(2+) contacts are provided by Ser37 and Thr59.

The protein belongs to the TRAFAC class TrmE-Era-EngA-EngB-Septin-like GTPase superfamily. EngB GTPase family. It depends on Mg(2+) as a cofactor.

Functionally, necessary for normal cell division and for the maintenance of normal septation. The polypeptide is Probable GTP-binding protein EngB (Clostridium beijerinckii (strain ATCC 51743 / NCIMB 8052) (Clostridium acetobutylicum)).